We begin with the raw amino-acid sequence, 559 residues long: Nuclear envelope integral membrane protein (559 aa).

A signal peptide spans 1–15; sequence MRLLTLALLVAGSLA. N-linked (GlcNAc...) asparagine glycosylation is found at Asn67, Asn81, and Asn114. 5 helical membrane-spanning segments follow: residues 164–184, 192–212, 218–238, 267–287, and 290–310; these read YTSG…FIVW, IGVP…HFAW, IMIE…LISM, LIYF…ALII, and ICRG…KAVW. 2 N-linked (GlcNAc...) asparagine glycosylation sites follow: Asn408 and Asn465. Disordered stretches follow at residues 475–494 and 510–559; these read RRDS…PRMP and KNGR…DADE. Positions 517–526 are enriched in polar residues; it reads PSSSTASGMT. Residues 530–539 show a composition bias toward basic and acidic residues; that stretch reads YMRKARRIDA.

Belongs to the NEMP family.

It localises to the nucleus inner membrane. Functionally, contributes to nuclear envelope stiffness in germ cells. Required for fertility. This chain is Nuclear envelope integral membrane protein, found in Caenorhabditis elegans.